A 79-amino-acid polypeptide reads, in one-letter code: Putative transmembrane protein ORF17 (79 aa).

A run of 2 helical transmembrane segments spans residues 8-28 (LMIY…IMYY) and 50-70 (VFVM…TTTI).

The protein resides in the host membrane. This is Putative transmembrane protein ORF17 from Haloarcula hispanica (His1V).